We begin with the raw amino-acid sequence, 240 residues long: UDP-2,3-diacylglucosamine hydrolase (240 aa).

Mn(2+)-binding residues include aspartate 9, histidine 11, aspartate 43, asparagine 81, and histidine 116. A substrate-binding site is contributed by 81-82; sequence NR. Substrate is bound by residues aspartate 124, serine 162, lysine 166, lysine 169, and histidine 197. Histidine 197 and histidine 199 together coordinate Mn(2+).

This sequence belongs to the LpxH family. It depends on Mn(2+) as a cofactor.

Its subcellular location is the cell inner membrane. The enzyme catalyses UDP-2-N,3-O-bis[(3R)-3-hydroxytetradecanoyl]-alpha-D-glucosamine + H2O = 2-N,3-O-bis[(3R)-3-hydroxytetradecanoyl]-alpha-D-glucosaminyl 1-phosphate + UMP + 2 H(+). It participates in glycolipid biosynthesis; lipid IV(A) biosynthesis; lipid IV(A) from (3R)-3-hydroxytetradecanoyl-[acyl-carrier-protein] and UDP-N-acetyl-alpha-D-glucosamine: step 4/6. Hydrolyzes the pyrophosphate bond of UDP-2,3-diacylglucosamine to yield 2,3-diacylglucosamine 1-phosphate (lipid X) and UMP by catalyzing the attack of water at the alpha-P atom. Involved in the biosynthesis of lipid A, a phosphorylated glycolipid that anchors the lipopolysaccharide to the outer membrane of the cell. The polypeptide is UDP-2,3-diacylglucosamine hydrolase (Neisseria meningitidis serogroup C / serotype 2a (strain ATCC 700532 / DSM 15464 / FAM18)).